The sequence spans 132 residues: Small ribosomal subunit protein uS8 (132 aa).

This sequence belongs to the universal ribosomal protein uS8 family. In terms of assembly, part of the 30S ribosomal subunit. Contacts proteins S5 and S12.

One of the primary rRNA binding proteins, it binds directly to 16S rRNA central domain where it helps coordinate assembly of the platform of the 30S subunit. The sequence is that of Small ribosomal subunit protein uS8 from Geobacter metallireducens (strain ATCC 53774 / DSM 7210 / GS-15).